A 315-amino-acid polypeptide reads, in one-letter code: MPEQKAPQDLQLILDDIYRELTPRLGEGKVADYIPQLARVNPQHFGMAIVTTGGEVHRVGDAEVPFSIQSISKVFTLTLALGKHGENIWHRVGREPSGSAFNSIVQLEHEGGKPRNPFINAGAITISDLILAGHTPKELIGEIVRFVRYLADDENIVIDHEVARSETVTGFRNFALASFMRSFGRLDHPVEHVLGVYFHHCALAMTCSQLAKAGLFLAAGGTNPLTGHSVVSRQRARRINALMLTCGHYDGSGDFAYRVGLPGKSGVGGGIMAVAPGKASIAVWSPGLNENGNSLLGSLALEMLAARTGWSVFGP.

Residues S70, N120, E166, N173, Y197, Y249, and V267 each contribute to the substrate site.

It belongs to the glutaminase family. Homotetramer.

It carries out the reaction L-glutamine + H2O = L-glutamate + NH4(+). The sequence is that of Glutaminase from Sinorhizobium fredii (strain NBRC 101917 / NGR234).